The sequence spans 144 residues: uncharacterized protein (144 aa).

Residues glutamate 23–lysine 82 adopt a coiled-coil conformation.

This is an uncharacterized protein from Acanthamoeba polyphaga mimivirus (APMV).